A 200-amino-acid polypeptide reads, in one-letter code: Adenylate kinase (200 aa).

11 to 16 (GAGKGT) is an ATP binding site. Positions 31 to 60 (STGDIFRQNIKDRTELGQQVQALVDAGNYV) are NMP. AMP is bound by residues Thr32, Arg37, 58–60 (NYV), 86–89 (GYPR), and Gln93. The segment at 127-137 (RRAAEQGRADD) is LID. Residue Arg128 participates in ATP binding. AMP contacts are provided by Arg134 and Arg145. Position 173 (Gly173) interacts with ATP.

This sequence belongs to the adenylate kinase family. In terms of assembly, monomer.

Its subcellular location is the cytoplasm. The catalysed reaction is AMP + ATP = 2 ADP. It participates in purine metabolism; AMP biosynthesis via salvage pathway; AMP from ADP: step 1/1. Catalyzes the reversible transfer of the terminal phosphate group between ATP and AMP. Plays an important role in cellular energy homeostasis and in adenine nucleotide metabolism. In Clavibacter michiganensis subsp. michiganensis (strain NCPPB 382), this protein is Adenylate kinase.